Consider the following 1020-residue polypeptide: C protein alpha-antigen (1020 aa).

A signal peptide spans 1 to 41 (MFRRSKNNSYDTSQTKQRFSIKKFKFGAASVLIGLSFLGGV). Positions 227 to 964 (VPDKDKYDPT…EVTVHVTPKP (738 aa)) are 9 X 82 AA tandem repeats. 16 disordered regions span residues 261–281 (DGSK…VPGD), 306–330 (PKPV…GTPV), 342–363 (PDGS…VPGD), 388–445 (PKPV…VPGD), 470–494 (PKPV…GTPV), 506–527 (PDGS…VPGD), 552–576 (PKPV…GTPV), 588–610 (PDGS…PGDH), 634–658 (PKPV…GTPV), 670–692 (PDGS…PGDH), 716–740 (PKPV…GTPV), 752–774 (PDGS…PGDH), 798–822 (PKPV…GTPV), 834–856 (PDGS…PGDH), 880–904 (PKPV…GTPV), and 962–989 (PKPV…KLPA). The segment covering 272-281 (DRPDTNVPGD) has biased composition (basic and acidic residues). Residues 320 to 329 (GETTVPQGTP) are compositionally biased toward polar residues. Residues 354-363 (DRPDTNVPGD) are compositionally biased toward basic and acidic residues. Polar residues predominate over residues 402 to 411 (GETTVPQGTP). Residues 436–445 (DRPDTNVPGD) show a composition bias toward basic and acidic residues. The span at 484–493 (GETTVPQGTP) shows a compositional bias: polar residues. Basic and acidic residues predominate over residues 518-527 (DRPDTNVPGD). A compositionally biased stretch (polar residues) spans 566 to 575 (GETTVPQGTP). Residues 600-610 (DRPDTNVPGDH) are compositionally biased toward basic and acidic residues. Residues 648 to 657 (GETTVPQGTP) show a composition bias toward polar residues. A compositionally biased stretch (basic and acidic residues) spans 682 to 692 (DRPDTNVPGDH). Residues 730–739 (GETTVPQGTP) show a composition bias toward polar residues. Basic and acidic residues predominate over residues 764 to 774 (DRPDTNVPGDH). Polar residues predominate over residues 812–821 (GETTVPQGTP). Over residues 846-856 (DRPDTNVPGDH) the composition is skewed to basic and acidic residues. Positions 894–903 (GETTVPQGTP) are enriched in polar residues. Positions 987–991 (LPATG) match the LPXTG sorting signal motif. Position 990 is a pentaglycyl murein peptidoglycan amidated threonine (Thr-990). Residues 991 to 1020 (GENATPFFNVAALTIISSVGLLSVSKKKED) constitute a propeptide, removed by sortase.

The protein resides in the secreted. It is found in the cell wall. Functionally, may play a role in both virulence and immunity. In Streptococcus agalactiae serotype Ia (strain ATCC 27591 / A909 / CDC SS700), this protein is C protein alpha-antigen (bca).